We begin with the raw amino-acid sequence, 262 residues long: Apolipoprotein A-I (262 aa).

The signal sequence occupies residues 1–18 (MKAVVLTLAVLFLTGSQA). 2 repeat units span residues 67–88 (LKLL…EQLG) and 89–110 (PVTQ…QEMN). Residues 67-262 (LKLLDNWDTL…DEASKKLNAQ (196 aa)) form a 10 X approximate tandem repeats region. Residue Met109 is modified to Methionine sulfoxide. One copy of the 3; half-length repeat lies at 111 to 121 (KDLEEVKQKVQ). Repeat copies occupy residues 122-142 (PYLD…RQKV), 144-165 (PLGE…DRLS), 166-184 (PLAQ…KQLA), 185-206 (PYSD…EGGG), and 207-227 (SLAE…EKAK). A 9; half-length repeat occupies 228-238 (PALEDLRQGLM). Met238 is modified (methionine sulfoxide). Repeat 10 spans residues 239-262 (PVLESLKVSILAAIDEASKKLNAQ).

Belongs to the apolipoprotein A1/A4/E family. Homodimer. Interacts with APOA1BP and CLU. Component of a sperm activating protein complex (SPAP), consisting of APOA1, an immunoglobulin heavy chain, an immunoglobulin light chain and albumin. Interacts with NDRG1. Interacts with SCGB3A2. Interacts with NAXE and YJEFN3. Post-translationally, glycosylated. In terms of processing, palmitoylated. Phosphorylation sites are present in the extracellular medium. As to expression, major protein of plasma HDL, also found in chylomicrons.

It is found in the secreted. Functionally, participates in the reverse transport of cholesterol from tissues to the liver for excretion by promoting cholesterol efflux from tissues and by acting as a cofactor for the lecithin cholesterol acyltransferase (LCAT). As part of the SPAP complex, activates spermatozoa motility. The chain is Apolipoprotein A-I (APOA1) from Pantholops hodgsonii (Chiru).